Here is a 261-residue protein sequence, read N- to C-terminus: 5'-nucleotidase SurE (261 aa).

A divalent metal cation-binding residues include D8, D9, S40, and N94.

Belongs to the SurE nucleotidase family. A divalent metal cation is required as a cofactor.

It is found in the cytoplasm. The catalysed reaction is a ribonucleoside 5'-phosphate + H2O = a ribonucleoside + phosphate. Its function is as follows. Nucleotidase that shows phosphatase activity on nucleoside 5'-monophosphates. This Anaplasma marginale (strain Florida) protein is 5'-nucleotidase SurE.